The sequence spans 233 residues: MRLVQLSRHSIAFPSPEGALREPNGLLALGGDLSPARLLMAYQRGIFPWFSPGDPILWWSPDPRAVLWPEQFHLSRSMKRFHQRSPYRVTLNHAFGEVIEGCASDRDEGTWITSSIVRAYHQLHELGHAHSIEVWQENTLVGGMYGVAQGALFCGESMFSRAENASKTALLVFCQDFAHSGGKLIDCQVLNNHTASLGAVDIPRRDYLDYLSVLRGYRLPERFWVPRVLFPGG.

The protein belongs to the L/F-transferase family.

It localises to the cytoplasm. The catalysed reaction is N-terminal L-lysyl-[protein] + L-leucyl-tRNA(Leu) = N-terminal L-leucyl-L-lysyl-[protein] + tRNA(Leu) + H(+). The enzyme catalyses N-terminal L-arginyl-[protein] + L-leucyl-tRNA(Leu) = N-terminal L-leucyl-L-arginyl-[protein] + tRNA(Leu) + H(+). It catalyses the reaction L-phenylalanyl-tRNA(Phe) + an N-terminal L-alpha-aminoacyl-[protein] = an N-terminal L-phenylalanyl-L-alpha-aminoacyl-[protein] + tRNA(Phe). Its function is as follows. Functions in the N-end rule pathway of protein degradation where it conjugates Leu, Phe and, less efficiently, Met from aminoacyl-tRNAs to the N-termini of proteins containing an N-terminal arginine or lysine. The protein is Leucyl/phenylalanyl-tRNA--protein transferase of Klebsiella pneumoniae subsp. pneumoniae (strain ATCC 700721 / MGH 78578).